We begin with the raw amino-acid sequence, 379 residues long: Very late expression factor 1 (379 aa).

The Tyr recombinase domain maps to 169–348 (VIDTILNFIN…YNIGLDETSS (180 aa)). Residues arginine 210, lysine 239, arginine 303, and histidine 326 contribute to the active site. Tyrosine 335 (O-(3'-phospho-DNA)-tyrosine intermediate) is an active-site residue. Residues 346–358 (TSSEEENNNDDDD) show a composition bias toward acidic residues. The tract at residues 346–379 (TSSEEENNNDDDDAQHNRNSSGSSGESLLYYRNE) is disordered. Residues 362 to 379 (NRNSSGSSGESLLYYRNE) are compositionally biased toward low complexity.

The protein belongs to the 'phage' integrase family.

Plays a role in nucleocapsid assembly and serves an essential function during the final stages of the DNA packaging process. Participates in the processing of branched DNA molecules at the late stages of viral genome replication. This Lepidoptera (butterflies and moths) protein is Very late expression factor 1 (VLF-1).